The primary structure comprises 866 residues: FHIP family protein v1g243165 (866 aa).

Disordered regions lie at residues 739–761 (RDGPPPSLMRAHSIGSIGSASTS) and 781–814 (GSTADISEDASPVSQAPETTGRPRASAVVRESQT). The segment covering 751–761 (SIGSIGSASTS) has biased composition (low complexity).

Belongs to the FHIP family.

The protein is FHIP family protein v1g243165 of Nematostella vectensis (Starlet sea anemone).